A 427-amino-acid polypeptide reads, in one-letter code: Adenylosuccinate synthetase (427 aa).

GTP is bound by residues 11 to 17 and 39 to 41; these read GDEGKGK and GHT. The Proton acceptor role is filled by D12. Residues D12 and G39 each contribute to the Mg(2+) site. IMP is bound by residues 12–15, 37–40, T132, R146, Q223, T238, and R302; these read DEGK and NAGH. The Proton donor role is filled by H40. 298–304 contributes to the substrate binding site; the sequence is TTTGRPR. Residues R304, 330–332, and 412–414 contribute to the GTP site; these read KLD and GVG.

Belongs to the adenylosuccinate synthetase family. Homodimer. It depends on Mg(2+) as a cofactor.

It localises to the cytoplasm. It carries out the reaction IMP + L-aspartate + GTP = N(6)-(1,2-dicarboxyethyl)-AMP + GDP + phosphate + 2 H(+). It functions in the pathway purine metabolism; AMP biosynthesis via de novo pathway; AMP from IMP: step 1/2. Plays an important role in the de novo pathway and in the salvage pathway of purine nucleotide biosynthesis. Catalyzes the first committed step in the biosynthesis of AMP from IMP. The sequence is that of Adenylosuccinate synthetase (purA) from Dictyostelium discoideum (Social amoeba).